Here is a 267-residue protein sequence, read N- to C-terminus: Phosphate import ATP-binding protein PstB 2 (267 aa).

The ABC transporter domain occupies 21–262; sequence LSTKDLHVYY…AKLQSTSDYV (242 aa). ATP is bound at residue 53–60; that stretch reads GPSGCGKS.

This sequence belongs to the ABC transporter superfamily. Phosphate importer (TC 3.A.1.7) family. The complex is composed of two ATP-binding proteins (PstB), two transmembrane proteins (PstC and PstA) and a solute-binding protein (PstS).

The protein localises to the cell membrane. The catalysed reaction is phosphate(out) + ATP + H2O = ADP + 2 phosphate(in) + H(+). In terms of biological role, part of the ABC transporter complex PstSACB involved in phosphate import. Responsible for energy coupling to the transport system. This is Phosphate import ATP-binding protein PstB 2 from Streptococcus mutans serotype c (strain ATCC 700610 / UA159).